A 186-amino-acid chain; its full sequence is UPF0397 protein LCABL_04350 (186 aa).

A run of 5 helical transmembrane segments spans residues 12-32 (VVAIGIGTAILFILKRFAVIP), 45-65 (GFLGFIATLFGPIAGFFIGFL), 77-97 (TPWWTWVFTTGLVGMVIGLFW), 112-132 (IVSFNLLQIITNVVSWSLIAP), and 150-170 (GIVSAISNSIATGVIGTILLV).

Belongs to the UPF0397 family.

It localises to the cell membrane. In Lacticaseibacillus casei (strain BL23) (Lactobacillus casei), this protein is UPF0397 protein LCABL_04350.